Here is a 239-residue protein sequence, read N- to C-terminus: Myogenic factor 6 (239 aa).

Residues 28–59 (PGVSPLYEGNDSPLSPGQDPVPSETGCESSGE) are disordered. In terms of domain architecture, bHLH spans 92–143 (DRRKAATLRERRRLKKINEAFDALKKKTVPNPNQRLPKVEILRSAINYIEKL). A compositionally biased stretch (polar residues) spans 182–196 (CQSWQENPDHSSSQM). Residues 182 to 239 (CQSWQENPDHSSSQMAGHREGAVLESSESSSLRRLSSIVDSISTEEPKARCPSQISEK) form a disordered region. Over residues 204–223 (VLESSESSSLRRLSSIVDSI) the composition is skewed to low complexity.

In terms of assembly, efficient DNA binding requires dimerization with another bHLH protein.

It localises to the nucleus. Involved in muscle differentiation (myogenic factor). Induces fibroblasts to differentiate into myoblasts. Probable sequence specific DNA-binding protein. The polypeptide is Myogenic factor 6 (myf6) (Danio rerio (Zebrafish)).